The primary structure comprises 140 residues: MKFTKSIREEDVKRDWILIDAKDKVFGRIITEIATILRGKHKPYYTPHVDCGDYVVVINADKVKFSTSKKLEDKYYKHTGYFGNLKEETVEKLLNNNPEKLFKLATRGMLPKTKLGRKMLKKLKVYAGENHPHTAQVKGN.

It belongs to the universal ribosomal protein uL13 family. Part of the 50S ribosomal subunit.

Functionally, this protein is one of the early assembly proteins of the 50S ribosomal subunit, although it is not seen to bind rRNA by itself. It is important during the early stages of 50S assembly. The sequence is that of Large ribosomal subunit protein uL13 from Nautilia profundicola (strain ATCC BAA-1463 / DSM 18972 / AmH).